Consider the following 149-residue polypeptide: MNKGHRHIIIRELITSNEIDTQEDLVELLLERDVKVTQATVSRDIKELHLVKVPTQTGGYKYSLPADNSFNPHQKLKRALIDCFIGIDNVQFMIILKVMPGNGNSVGALIDNLDWPEKAGTICGDDTCLIICRSEENAKTLTDRFIDML.

This sequence belongs to the ArgR family.

Its subcellular location is the cytoplasm. It functions in the pathway amino-acid biosynthesis; L-arginine biosynthesis [regulation]. In terms of biological role, regulates arginine biosynthesis genes. This chain is Arginine repressor, found in Listeria monocytogenes serotype 4b (strain F2365).